The primary structure comprises 728 residues: Catalase-peroxidase (728 aa).

The segment at residues 91–218 (WHSAGTYRTA…LAAVQMGLIY (128 aa)) is a cross-link (tryptophyl-tyrosyl-methioninium (Trp-Tyr) (with M-244)). His-92 functions as the Proton acceptor in the catalytic mechanism. The segment at residues 218 to 244 (YVNPEGPDGNPDPVAAARDIRDTFARM) is a cross-link (tryptophyl-tyrosyl-methioninium (Tyr-Met) (with W-91)). His-259 provides a ligand contact to heme b.

Belongs to the peroxidase family. Peroxidase/catalase subfamily. In terms of assembly, homodimer or homotetramer. Requires heme b as cofactor. Post-translationally, formation of the three residue Trp-Tyr-Met cross-link is important for the catalase, but not the peroxidase activity of the enzyme.

The enzyme catalyses H2O2 + AH2 = A + 2 H2O. It carries out the reaction 2 H2O2 = O2 + 2 H2O. Functionally, bifunctional enzyme with both catalase and broad-spectrum peroxidase activity. This Burkholderia thailandensis (strain ATCC 700388 / DSM 13276 / CCUG 48851 / CIP 106301 / E264) protein is Catalase-peroxidase.